The following is a 362-amino-acid chain: Endopolygalacturonase II (362 aa).

Residues 1 to 20 (MHSFASLLRYGLAAGATLAS) form the signal peptide. Positions 21–27 (ASPIEAR) are excised as a propeptide. A disulfide bond links Cys30 and Cys45. One copy of the PbH1 1 repeat lies at 156–186 (SDDITLTDITINNADGDSLGGHNTDAFDVGN). The active-site Proton donor is the Asp201. The cysteines at positions 203 and 219 are disulfide-linked. PbH1 repeat units follow at residues 209 to 229 (GENIWFTGGTCIGGHGLSIGS), 238 to 259 (VKNVTIEHSTVSNSENAVRIKT), 267 to 289 (VSEITYSNIVMSGISDYGVVIQQ), and 301 to 322 (TNGVTITDVKLESVTGTVDSKA). Residue His223 is part of the active site. The N-linked (GlcNAc...) asparagine glycan is linked to Asn240. 2 disulfide bridges follow: Cys329–Cys334 and Cys353–Cys362.

The protein belongs to the glycosyl hydrolase 28 family.

It is found in the secreted. It carries out the reaction (1,4-alpha-D-galacturonosyl)n+m + H2O = (1,4-alpha-D-galacturonosyl)n + (1,4-alpha-D-galacturonosyl)m.. Its function is as follows. Involved in maceration and soft-rotting of plant tissue. Hydrolyzes the 1,4-alpha glycosidic bonds of de-esterified pectate in the smooth region of the plant cell wall. In Aspergillus awamori (Black koji mold), this protein is Endopolygalacturonase II (pgaII).